Reading from the N-terminus, the 217-residue chain is T-complex protein 10A homolog 1 (217 aa).

A disordered region spans residues 1-26 (MLAGQLEARDPKEGTHPEDPCPGAGA). The span at 7–19 (EARDPKEGTHPED) shows a compositional bias: basic and acidic residues. Residues 69 to 110 (ADVHGKLRSHIDALREQNMELREKLRALQLQRWKARKKSAAS) adopt a coiled-coil conformation. Residues 75 to 96 (LRSHIDALREQNMELREKLRAL) are leucine-zipper. The span at 175–192 (ERISSWKTPPQEKRDKSL) shows a compositional bias: basic and acidic residues. Residues 175 to 217 (ERISSWKTPPQEKRDKSLSRRRQDRRATPTGRPTPCAERRGGV) are disordered.

Belongs to the TCP10 family. In terms of assembly, self-associates (via leucine zipper). Interacts (via leucine zipper) with ZIPK/DAPK3 (via leucine zipper). Interacts with MAD4.

It is found in the nucleus. May be involved in transcriptional regulation. Has in vitro transcription inhibition activity. The polypeptide is T-complex protein 10A homolog 1 (TCP10L) (Pan troglodytes (Chimpanzee)).